We begin with the raw amino-acid sequence, 118 residues long: Ribonuclease P protein component (118 aa).

Belongs to the RnpA family. In terms of assembly, consists of a catalytic RNA component (M1 or rnpB) and a protein subunit.

The catalysed reaction is Endonucleolytic cleavage of RNA, removing 5'-extranucleotides from tRNA precursor.. Functionally, RNaseP catalyzes the removal of the 5'-leader sequence from pre-tRNA to produce the mature 5'-terminus. It can also cleave other RNA substrates such as 4.5S RNA. The protein component plays an auxiliary but essential role in vivo by binding to the 5'-leader sequence and broadening the substrate specificity of the ribozyme. This Enterococcus faecalis (strain ATCC 700802 / V583) protein is Ribonuclease P protein component.